The sequence spans 461 residues: L-seryl-tRNA(Sec) selenium transferase (461 aa).

Lysine 294 is subject to N6-(pyridoxal phosphate)lysine.

This sequence belongs to the SelA family. The cofactor is pyridoxal 5'-phosphate.

Its subcellular location is the cytoplasm. The catalysed reaction is L-seryl-tRNA(Sec) + selenophosphate + H(+) = L-selenocysteinyl-tRNA(Sec) + phosphate. The protein operates within aminoacyl-tRNA biosynthesis; selenocysteinyl-tRNA(Sec) biosynthesis; selenocysteinyl-tRNA(Sec) from L-seryl-tRNA(Sec) (bacterial route): step 1/1. Converts seryl-tRNA(Sec) to selenocysteinyl-tRNA(Sec) required for selenoprotein biosynthesis. The polypeptide is L-seryl-tRNA(Sec) selenium transferase (Haemophilus influenzae (strain ATCC 51907 / DSM 11121 / KW20 / Rd)).